The following is a 304-amino-acid chain: Acetaldehyde dehydrogenase 1 (304 aa).

The Acyl-thioester intermediate role is filled by Cys131. NAD(+) contacts are provided by residues Ser162–Asn170 and Asn273.

This sequence belongs to the acetaldehyde dehydrogenase family.

The catalysed reaction is acetaldehyde + NAD(+) + CoA = acetyl-CoA + NADH + H(+). The protein is Acetaldehyde dehydrogenase 1 of Dechloromonas aromatica (strain RCB).